The primary structure comprises 131 residues: Sec-independent protein translocase protein TatB (131 aa).

A helical membrane pass occupies residues 2-22; it reads FDGIGFMELLLIGIVGLVVLG. Residues 86–95 are compositionally biased toward polar residues; the sequence is LKEAAQSVNR. Positions 86–131 are disordered; the sequence is LKEAAQSVNRPYQVEDVPAAKDVPAKEMPTSETSTATNANSDKPNG. The span at 115-131 shows a compositional bias: low complexity; sequence TSETSTATNANSDKPNG.

The protein belongs to the TatB family. As to quaternary structure, the Tat system comprises two distinct complexes: a TatABC complex, containing multiple copies of TatA, TatB and TatC subunits, and a separate TatA complex, containing only TatA subunits. Substrates initially bind to the TatABC complex, which probably triggers association of the separate TatA complex to form the active translocon.

Its subcellular location is the cell inner membrane. In terms of biological role, part of the twin-arginine translocation (Tat) system that transports large folded proteins containing a characteristic twin-arginine motif in their signal peptide across membranes. Together with TatC, TatB is part of a receptor directly interacting with Tat signal peptides. TatB may form an oligomeric binding site that transiently accommodates folded Tat precursor proteins before their translocation. In Shewanella halifaxensis (strain HAW-EB4), this protein is Sec-independent protein translocase protein TatB.